We begin with the raw amino-acid sequence, 216 residues long: 3-isopropylmalate dehydratase small subunit 1 (216 aa).

It belongs to the LeuD family. LeuD type 1 subfamily. As to quaternary structure, heterodimer of LeuC and LeuD.

It carries out the reaction (2R,3S)-3-isopropylmalate = (2S)-2-isopropylmalate. Its pathway is amino-acid biosynthesis; L-leucine biosynthesis; L-leucine from 3-methyl-2-oxobutanoate: step 2/4. Functionally, catalyzes the isomerization between 2-isopropylmalate and 3-isopropylmalate, via the formation of 2-isopropylmaleate. This Bordetella bronchiseptica (strain ATCC BAA-588 / NCTC 13252 / RB50) (Alcaligenes bronchisepticus) protein is 3-isopropylmalate dehydratase small subunit 1.